The sequence spans 261 residues: Indole-3-glycerol phosphate synthase (261 aa).

The protein belongs to the TrpC family.

It carries out the reaction 1-(2-carboxyphenylamino)-1-deoxy-D-ribulose 5-phosphate + H(+) = (1S,2R)-1-C-(indol-3-yl)glycerol 3-phosphate + CO2 + H2O. It participates in amino-acid biosynthesis; L-tryptophan biosynthesis; L-tryptophan from chorismate: step 4/5. The protein is Indole-3-glycerol phosphate synthase of Burkholderia lata (strain ATCC 17760 / DSM 23089 / LMG 22485 / NCIMB 9086 / R18194 / 383).